We begin with the raw amino-acid sequence, 279 residues long: Putative biopolymer transport protein ExbB homolog (279 aa).

3 helical membrane-spanning segments follow: residues 19 to 39 (SGGV…ITAL), 126 to 146 (IIEV…WYTF), and 162 to 182 (IYVA…LMPL).

The protein belongs to the ExbB/TolQ family.

The protein resides in the cell membrane. The polypeptide is Putative biopolymer transport protein ExbB homolog (Methanothermobacter thermautotrophicus (strain ATCC 29096 / DSM 1053 / JCM 10044 / NBRC 100330 / Delta H) (Methanobacterium thermoautotrophicum)).